A 209-amino-acid chain; its full sequence is Eukaryotic translation initiation factor 4E (209 aa).

MRNA is bound by residues 51–52 (WH), 97–98 (WE), and 153–158 (RKQAYR).

The protein belongs to the eukaryotic initiation factor 4E family. As to quaternary structure, eIF4F is a multi-subunit complex, the composition of which varies with external and internal environmental conditions. It is composed of at least eIF4A, eIF4E and eIF4G. eIF4E is also known to interact with other partners.

Its function is as follows. Recognizes and binds the 7-methylguanosine-containing mRNA cap during an early step in the initiation of protein synthesis and facilitates ribosome binding by inducing the unwinding of the mRNAs secondary structures. This is Eukaryotic translation initiation factor 4E (TIF45) from Candida albicans (strain SC5314 / ATCC MYA-2876) (Yeast).